A 695-amino-acid chain; its full sequence is Follicle-stimulating hormone receptor (695 aa).

The N-terminal stretch at 1–17 is a signal peptide; sequence MALLLVSLLAFMSLGSG. 2 cysteine pairs are disulfide-bonded: cysteine 18-cysteine 25 and cysteine 23-cysteine 32. One can recognise an LRRNT domain in the interval 18-46; sequence CHHRLCHCSNRVFLCQESKVTEIPSDLPR. At 18–366 the chain is on the extracellular side; it reads CHHRLCHCSN…EDIMGYNILR (349 aa). LRR repeat units follow at residues 49-72, 73-97, 98-118, 119-143, 144-169, 170-192, 193-216, 217-240, and 241-259; these read VELR…FGDL, EKIE…LPNL, HEIR…AFQN, LPNL…KIQS, LQKV…LGLS, SESV…AFNG, TQLD…VFQG, ASGP…GLEN, and LKKL…PSLE. 2 N-linked (GlcNAc...) asparagine glycosylation sites follow: asparagine 191 and asparagine 199. 4 cysteine pairs are disulfide-bonded: cysteine 275–cysteine 346, cysteine 276–cysteine 292, cysteine 276–cysteine 356, and cysteine 292–cysteine 338. Residue asparagine 293 is glycosylated (N-linked (GlcNAc...) asparagine). The residue at position 335 (tyrosine 335) is a Sulfotyrosine. A helical membrane pass occupies residues 367 to 387; the sequence is VLIWFISILAITGNVAVLVVL. Topologically, residues 388–398 are cytoplasmic; that stretch reads TTSQYKLTVPR. A helical transmembrane segment spans residues 399–421; sequence FLMCNLAFADLCIGIYLLLIASV. The Extracellular portion of the chain corresponds to 422-443; that stretch reads DVHTRTLYHNYAIDWQTGAGCA. Cysteine 442 and cysteine 517 are joined by a disulfide. A helical transmembrane segment spans residues 444 to 465; it reads DCWLFTVFASELSVYTLTAITL. Over 466–485 the chain is Cytoplasmic; it reads ERWHTITHAMQLDCKVQLRH. A helical membrane pass occupies residues 486–508; that stretch reads AASIMVIGWIFSSAAALFPIFGV. The Extracellular portion of the chain corresponds to 509–528; the sequence is SSYMKVSICLPMDIDSPLSQ. A helical membrane pass occupies residues 529–550; sequence LYVMFLLVLNVLAFVVICGCYL. Over 551–573 the chain is Cytoplasmic; sequence HIYLTVRNPNIVSSASDTRIAKR. A helical membrane pass occupies residues 574-597; it reads MATLIFTDFLCMAPISFFAISASL. The Extracellular segment spans residues 598 to 608; that stretch reads KVPLITVSKAK. The chain crosses the membrane as a helical span at residues 609-630; it reads ILLVLFYPINSCANPFLYAIFT. Residues 631–695 lie on the Cytoplasmic side of the membrane; the sequence is KNFRRDLFIL…LAPLNHLAQN (65 aa). The tract at residues 658-677 is disordered; the sequence is TSSTAHNSHPRNGHSSSVSR.

The protein belongs to the G-protein coupled receptor 1 family. FSH/LSH/TSH subfamily. In terms of assembly, homotrimer. Functions as a homotrimer binding the FSH hormone heterodimer composed of CGA and FSHB. Interacts with ARRB2. Interacts with APPL2; interaction is independent of follicle stimulating hormone stimulation. Post-translationally, N-glycosylated; indirectly required for FSH-binding, possibly via a conformational change that allows high affinity binding of hormone. Sulfated.

The protein localises to the cell membrane. Its function is as follows. G protein-coupled receptor for follitropin, the follicle-stimulating hormone. Through cAMP production activates the downstream PI3K-AKT and ERK1/ERK2 signaling pathways. The chain is Follicle-stimulating hormone receptor (FSHR) from Cavia porcellus (Guinea pig).